Here is a 25-residue protein sequence, read N- to C-terminus: Xenoposin precursor fragment R2 (25 aa).

As to expression, expressed by the skin glands.

The protein resides in the secreted. Its function is as follows. Antimicrobial peptide. In Xenopus ruwenzoriensis (Uganda clawed frog), this protein is Xenoposin precursor fragment R2.